We begin with the raw amino-acid sequence, 745 residues long: MQRDYLIRVETESMLDFKRLNGLMIGFVIKGEAHIYDENNMTQCNSGDIFIINHRDLYRFQLQQDGIICYIQFQMKYLADKFDDVHCLYFHLTDATTTKNIHQLRNIMARLVSTHIRHNELSKLTEQQLVIQLLMHMIHYVPRTYHSNQSILNDDKVNQVCDYIELHFHEDLSLSELSEYVGWSESHLSKKFAESLGVGFQHFLNTTRIEHAKLDLTYTDETITDIALQNGFSSAASFARTFKHFTHQTPKQYRGDRPAITENQQSAQHNYHDRELILLLNDYIEEMNHFIEDIEKVNYKEITFQPTNHQLNQFNHIIQVGYLRNLLNTQYQSQLLTCHSDFQVNEVLAYDVMPYIMKKLNAPFTYDAEISNIFYDIDLCLDFLLDHNFSLTMHLNQYDSRDYIDAFKVFIHHVALHVSHRKDLKFNLYVTTLHNSLIEMIDYFKALFPNGGLYVHLDQATERHLPLLKRLEPHIDHFVFDANSNDAVDFNKMNDDEFKTASQMIINKTNYLIDLMHRHHLKRPLILLNWNTLTGDTFITNGEYFRGGIIIEQLLKLSSKVEGIGYWLNYDLHVSHCKNERDYMNSIELFHQYNGKRPVYFTALLFNKLTSNILYSDDTCIVTGTDSNFQILLYDAKHFNPYLALDNQMNMRATEMIHLNINALEEGIYKIKHFTLDKENGALFNLWRKHHTIHGMDKDSIDYVNRMSFPKLEVYDIDVTDTLALNIKMITNGIHLIEVKRYPSS.

One can recognise an HTH araC/xylS-type domain in the interval 158–256 (NQVCDYIELH…HQTPKQYRGD (99 aa)). DNA-binding regions (H-T-H motif) lie at residues 175–196 (SELSEYVGWSESHLSKKFAESL) and 223–246 (ITDIALQNGFSSAASFARTFKHFT).

This is an uncharacterized protein from Staphylococcus aureus (strain MRSA252).